Reading from the N-terminus, the 367-residue chain is 2-oxoisovalerate dehydrogenase subunit alpha (367 aa).

Substrate-binding positions include F66, Y95, 128–131 (MPEH), and S144. Thiamine diphosphate is bound at residue 94–96 (YYR). Residues 144–146 (SPI), 174–180 (GDGATSE), 204–208 (NFYAI), and H273 each bind thiamine diphosphate. Mg(2+) is bound by residues D175, N204, and Y206.

Belongs to the BCKDHA family. As to quaternary structure, heterotetramer of two alpha and two beta chains. Directly associated with ODBB in the E1 complex. Requires thiamine diphosphate as cofactor.

The catalysed reaction is N(6)-[(R)-lipoyl]-L-lysyl-[protein] + 3-methyl-2-oxobutanoate + H(+) = N(6)-[(R)-S(8)-2-methylpropanoyldihydrolipoyl]-L-lysyl-[protein] + CO2. In terms of biological role, the branched-chain alpha-keto dehydrogenase complex catalyzes the overall conversion of alpha-keto acids to acyl-CoA and CO(2). It contains multiple copies of three enzymatic components: branched-chain alpha-keto acid decarboxylase (E1), lipoamide acyltransferase (E2) and lipoamide dehydrogenase (E3). The chain is 2-oxoisovalerate dehydrogenase subunit alpha from Thermus thermophilus (strain ATCC BAA-163 / DSM 7039 / HB27).